The sequence spans 1183 residues: 3-hydroxy-3-methylglutaryl-coenzyme A reductase (1183 aa).

The Cytoplasmic portion of the chain corresponds to 1–245; it reads MAAILLPQRF…DLLKNAETLD (245 aa). Residues 245–426 form the SSD domain; it reads DIVIMLLGYI…FTFYTAILSI (182 aa). A helical membrane pass occupies residues 246 to 266; that stretch reads IVIMLLGYIAMHLTFVSLFLS. At 267–273 the chain is on the lumenal side; sequence MRKMGSK. Residues 274–294 traverse the membrane as a helical segment; sequence FWLGICTLFSSVFAFLFGLVV. Over 295-299 the chain is Cytoplasmic; the sequence is TTKLG. Residues 300-320 traverse the membrane as a helical segment; that stretch reads VPISVILLSEGLPFLVVTIGF. Over 321–378 the chain is Lumenal; sequence EKNIVLTRAVMSHAIEHRRIQAQNSKSGKRSPERSTQNMIQYAVQAAIKEKGFEIIRD. A helical membrane pass occupies residues 379–399; the sequence is YAIEIVILVIGAASGVQGGLQ. Residues 400–402 are Cytoplasmic-facing; sequence QFC. The helical transmembrane segment at 403 to 423 threads the bilayer; sequence FLAAWTLFFDFILLFTFYTAI. Topologically, residues 424 to 482 are lumenal; sequence LSIKLEINRIKRHVDMRMALEDDGVSRRVAENVAKGDDELNRVRGDAPLFGRKSSSIPK. A helical transmembrane segment spans residues 483–503; that stretch reads FKVLMILGFIFVNIVNICSIP. The Cytoplasmic segment spans residues 504–1183; that stretch reads FRNPSSMSTI…SAAAIQRSKR (680 aa). Glutamate 828 acts as the Charge relay system in catalysis. 834 to 840 is a binding site for CoA; sequence SASRGCK. Residues 895–897 and 922–930 each bind NADP(+); these read SRF and DAMGMNMIS. The active-site Charge relay system is the lysine 962. 991–993 contacts CoA; sequence VLK. Catalysis depends on aspartate 1038, which acts as the Charge relay system. Residue 1133-1134 coordinates CoA; the sequence is AH. Catalysis depends on histidine 1134, which acts as the Proton donor. A disordered region spans residues 1136–1183; it reads QHNRSAAPSRSTTPAPPMTPVSLAMTSAQERSASTTSMSAAAIQRSKR. An NADP(+)-binding site is contributed by 1138 to 1139; the sequence is NR. Composition is skewed to low complexity over residues 1139–1148 and 1167–1177; these read RSAAPSRSTT and SASTTSMSAAA.

Belongs to the HMG-CoA reductase family.

Its subcellular location is the endoplasmic reticulum membrane. It catalyses the reaction (R)-mevalonate + 2 NADP(+) + CoA = (3S)-3-hydroxy-3-methylglutaryl-CoA + 2 NADPH + 2 H(+). It functions in the pathway metabolic intermediate biosynthesis; (R)-mevalonate biosynthesis; (R)-mevalonate from acetyl-CoA: step 3/3. In terms of biological role, HMG-CoA reductase; part of the first module of ergosterol biosynthesis pathway that includes the early steps of the pathway, conserved across all eukaryotes, and which results in the formation of mevalonate from acetyl-coenzyme A (acetyl-CoA). In this module, the cytosolic acetyl-CoA acetyltransferase catalyzes the formation of acetoacetyl-CoA. The hydroxymethylglutaryl-CoA synthase then condenses acetyl-CoA with acetoacetyl-CoA to form HMG-CoA. The rate-limiting step of the early module is the reduction to mevalonate by the 3-hydroxy-3-methylglutaryl-coenzyme A (HMG-CoA) reductase HMGR. The chain is 3-hydroxy-3-methylglutaryl-coenzyme A reductase (HMGR) from Gibberella fujikuroi (strain CBS 195.34 / IMI 58289 / NRRL A-6831) (Bakanae and foot rot disease fungus).